The following is a 33-amino-acid chain: Photosystem II reaction center protein Psb30 (33 aa).

A helical membrane pass occupies residues 5 to 25; sequence LIVQLTSLILISIAGPIIIAL.

The protein belongs to the Psb30/Ycf12 family. As to quaternary structure, PSII is composed of 1 copy each of membrane proteins PsbA, PsbB, PsbC, PsbD, PsbE, PsbF, PsbH, PsbI, PsbJ, PsbK, PsbL, PsbM, PsbT, PsbY, PsbZ, Psb30/Ycf12, peripheral proteins of the oxygen-evolving complex and a large number of cofactors. It forms dimeric complexes.

It is found in the plastid. The protein resides in the chloroplast thylakoid membrane. Its function is as follows. A core subunit of photosystem II (PSII), probably helps stabilize the reaction center. This chain is Photosystem II reaction center protein Psb30, found in Euglena myxocylindracea.